Here is a 164-residue protein sequence, read N- to C-terminus: 2S seed storage protein 1 (164 aa).

A signal peptide spans 1–21 (MANKLFLVCAALALCFLLTNA). 3 propeptides span residues 22 to 37 (SIYRTVVEFEEDDATN), 74 to 83 (EFDFEDDMEN), and 163 to 164 (FY).

This sequence belongs to the 2S seed storage albumins family. In terms of assembly, the mature protein consists of a small and a large chain linked by disulfide bonds.

In terms of biological role, this is a 2S seed storage protein. This Arabidopsis thaliana (Mouse-ear cress) protein is 2S seed storage protein 1 (AT2S1).